A 145-amino-acid chain; its full sequence is 3-hydroxyacyl-[acyl-carrier-protein] dehydratase FabZ (145 aa).

The active site involves H49.

The protein belongs to the thioester dehydratase family. FabZ subfamily.

It is found in the cytoplasm. The catalysed reaction is a (3R)-hydroxyacyl-[ACP] = a (2E)-enoyl-[ACP] + H2O. Functionally, involved in unsaturated fatty acids biosynthesis. Catalyzes the dehydration of short chain beta-hydroxyacyl-ACPs and long chain saturated and unsaturated beta-hydroxyacyl-ACPs. This chain is 3-hydroxyacyl-[acyl-carrier-protein] dehydratase FabZ, found in Rickettsia typhi (strain ATCC VR-144 / Wilmington).